A 53-amino-acid chain; its full sequence is UPF0391 membrane protein ESA_03375 (53 aa).

2 helical membrane passes run 4-24 and 28-48; these read WGII…GGLA and AGAA…SLFM.

The protein belongs to the UPF0391 family.

It is found in the cell membrane. The chain is UPF0391 membrane protein ESA_03375 from Cronobacter sakazakii (strain ATCC BAA-894) (Enterobacter sakazakii).